The sequence spans 301 residues: MVSQAAKILDGKALAQKIQLSLKEEIQTLQPKIGRPPGLAVLMVGDNPASAVYVRNKEKSCTKVGMASFGRHFPGETSQSELEQVIEELNQDSRVDGILIQLPLPDHLDGIALLHQINPEKDADGLHPTNLGRLVRGEPGLRSCTPAGVMALLEEYNLEVKGKHAVVIGRSILVGKPMGLMLLEENATVTIAHSLTQNLTELTRSADILVAAAGKANLITPEMVKPGAVVIDVGINRIEDESGKARLVGDVDYEGVAEVAQYITPVPGGIGPMTVAMLLSNTVYSYRQKEAGVERQKAGGN.

NADP(+) is bound by residues 169–171, Ser-194, and Ile-235; that span reads GRS.

This sequence belongs to the tetrahydrofolate dehydrogenase/cyclohydrolase family. As to quaternary structure, homodimer.

It carries out the reaction (6R)-5,10-methylene-5,6,7,8-tetrahydrofolate + NADP(+) = (6R)-5,10-methenyltetrahydrofolate + NADPH. The enzyme catalyses (6R)-5,10-methenyltetrahydrofolate + H2O = (6R)-10-formyltetrahydrofolate + H(+). It participates in one-carbon metabolism; tetrahydrofolate interconversion. Catalyzes the oxidation of 5,10-methylenetetrahydrofolate to 5,10-methenyltetrahydrofolate and then the hydrolysis of 5,10-methenyltetrahydrofolate to 10-formyltetrahydrofolate. The protein is Bifunctional protein FolD of Gloeothece citriformis (strain PCC 7424) (Cyanothece sp. (strain PCC 7424)).